A 170-amino-acid chain; its full sequence is Disulfide bond formation protein B 1 (170 aa).

At 1-14 the chain is on the cytoplasmic side; it reads MNDYTLAIRRERRL. The helical transmembrane segment at 15–31 threads the bilayer; it reads LMLLGWVCIALLAGALY. Residues 32–49 are Periplasmic-facing; it reads LQYVKNEDPCPLCIIQRY. A disulfide bridge links Cys41 with Cys44. Residues 50-64 form a helical membrane-spanning segment; sequence FFCAIGIFAFLAAGI. At 65-71 the chain is on the cytoplasmic side; that stretch reads RNWRGVW. The chain crosses the membrane as a helical span at residues 72–89; it reads VLELLIAIAAAGGVGTAA. Residues 90–144 are Periplasmic-facing; sequence RHLTIQMNPGFSCGFDTLQPIVDSLPPAQWFPGMFKVAGLCETVYPPIFGILLPG. Cys102 and Cys130 are oxidised to a cystine. Residues 145 to 163 form a helical membrane-spanning segment; that stretch reads WSLIGFAVILIAVVASLWR. Residues 164 to 170 lie on the Cytoplasmic side of the membrane; the sequence is HRRKLVG.

The protein belongs to the DsbB family.

Its subcellular location is the cell inner membrane. In terms of biological role, required for disulfide bond formation in some periplasmic proteins. Acts by oxidizing the DsbA protein. The chain is Disulfide bond formation protein B 1 from Burkholderia lata (strain ATCC 17760 / DSM 23089 / LMG 22485 / NCIMB 9086 / R18194 / 383).